Reading from the N-terminus, the 244-residue chain is UDP-2,3-diacylglucosamine hydrolase (244 aa).

5 residues coordinate Mn(2+): D8, H10, D41, N79, and H114. 79-80 is a binding site for substrate; the sequence is NR. The substrate site is built by D122, S160, N164, K167, and H195. Residues H195 and H197 each coordinate Mn(2+).

It belongs to the LpxH family. It depends on Mn(2+) as a cofactor.

Its subcellular location is the cell inner membrane. The enzyme catalyses UDP-2-N,3-O-bis[(3R)-3-hydroxytetradecanoyl]-alpha-D-glucosamine + H2O = 2-N,3-O-bis[(3R)-3-hydroxytetradecanoyl]-alpha-D-glucosaminyl 1-phosphate + UMP + 2 H(+). Its pathway is glycolipid biosynthesis; lipid IV(A) biosynthesis; lipid IV(A) from (3R)-3-hydroxytetradecanoyl-[acyl-carrier-protein] and UDP-N-acetyl-alpha-D-glucosamine: step 4/6. In terms of biological role, hydrolyzes the pyrophosphate bond of UDP-2,3-diacylglucosamine to yield 2,3-diacylglucosamine 1-phosphate (lipid X) and UMP by catalyzing the attack of water at the alpha-P atom. Involved in the biosynthesis of lipid A, a phosphorylated glycolipid that anchors the lipopolysaccharide to the outer membrane of the cell. The chain is UDP-2,3-diacylglucosamine hydrolase from Marinobacter nauticus (strain ATCC 700491 / DSM 11845 / VT8) (Marinobacter aquaeolei).